Here is a 224-residue protein sequence, read N- to C-terminus: 7-cyano-7-deazaguanine synthase (224 aa).

ATP is bound at residue 12–22; it reads LSGGLDSSTVT. Cys-193, Cys-201, Cys-204, and Cys-207 together coordinate Zn(2+).

This sequence belongs to the QueC family. Requires Zn(2+) as cofactor.

It catalyses the reaction 7-carboxy-7-deazaguanine + NH4(+) + ATP = 7-cyano-7-deazaguanine + ADP + phosphate + H2O + H(+). It functions in the pathway purine metabolism; 7-cyano-7-deazaguanine biosynthesis. Catalyzes the ATP-dependent conversion of 7-carboxy-7-deazaguanine (CDG) to 7-cyano-7-deazaguanine (preQ(0)). This Prochlorococcus marinus (strain MIT 9515) protein is 7-cyano-7-deazaguanine synthase.